We begin with the raw amino-acid sequence, 253 residues long: Phosphate import ATP-binding protein PstB (253 aa).

The ABC transporter domain maps to 7–248 (IDARDVNFWY…PEKEATQNYI (242 aa)). Residue 39 to 46 (GPSGCGKS) participates in ATP binding.

The protein belongs to the ABC transporter superfamily. Phosphate importer (TC 3.A.1.7) family. In terms of assembly, the complex is composed of two ATP-binding proteins (PstB), two transmembrane proteins (PstC and PstA) and a solute-binding protein (PstS).

It is found in the cell inner membrane. The enzyme catalyses phosphate(out) + ATP + H2O = ADP + 2 phosphate(in) + H(+). Functionally, part of the ABC transporter complex PstSACB involved in phosphate import. Responsible for energy coupling to the transport system. The protein is Phosphate import ATP-binding protein PstB of Bacteroides fragilis (strain ATCC 25285 / DSM 2151 / CCUG 4856 / JCM 11019 / LMG 10263 / NCTC 9343 / Onslow / VPI 2553 / EN-2).